The chain runs to 193 residues: ATP synthase subunit b 2 (193 aa).

A helical membrane pass occupies residues 44-64 (IFWLVLTLLAIYFVLTKIALP).

It belongs to the ATPase B chain family. In terms of assembly, F-type ATPases have 2 components, F(1) - the catalytic core - and F(0) - the membrane proton channel. F(1) has five subunits: alpha(3), beta(3), gamma(1), delta(1), epsilon(1). F(0) has three main subunits: a(1), b(2) and c(10-14). The alpha and beta chains form an alternating ring which encloses part of the gamma chain. F(1) is attached to F(0) by a central stalk formed by the gamma and epsilon chains, while a peripheral stalk is formed by the delta and b chains.

It is found in the cell inner membrane. F(1)F(0) ATP synthase produces ATP from ADP in the presence of a proton or sodium gradient. F-type ATPases consist of two structural domains, F(1) containing the extramembraneous catalytic core and F(0) containing the membrane proton channel, linked together by a central stalk and a peripheral stalk. During catalysis, ATP synthesis in the catalytic domain of F(1) is coupled via a rotary mechanism of the central stalk subunits to proton translocation. Functionally, component of the F(0) channel, it forms part of the peripheral stalk, linking F(1) to F(0). The b'-subunit is a diverged and duplicated form of b found in plants and photosynthetic bacteria. This chain is ATP synthase subunit b 2 (atpF2), found in Jannaschia sp. (strain CCS1).